Here is a 404-residue protein sequence, read N- to C-terminus: Triose phosphate/phosphate translocator, chloroplastic (404 aa).

The N-terminal 74 residues, 1 to 74, are a transit peptide targeting the chloroplast; it reads MESRVLSRTT…GPVCSRREKT (74 aa). Over 75-98 the chain is Chloroplast intermembrane; sequence AVQPCRAASGSSGEAKTGFLEKYP. The helical transmembrane segment at 99–119 threads the bilayer; that stretch reads ALVTGSFFFMWYFLNVIFNIL. Over 120–131 the chain is Lumenal; sequence NKKIYNYFPYPY. The helical transmembrane segment at 132–152 threads the bilayer; it reads FVSVIHLFVGVVYCLASWSVG. Over 153 to 209 the chain is Chloroplast intermembrane; it reads LPKRAPMDSKLLKLLIPVAVCHAIGHVTSNVSFAAVAVSFTHTIKALEPFFNAAASQ. Residues 210–230 traverse the membrane as a helical segment; it reads FVLGQSIPITLWLSLAPVVIG. The Lumenal portion of the chain corresponds to 231–274; the sequence is VSMASLTELSFNWLGFISAMISNVSFTYRSLYSKKAMTDMDSTN. Residues 275–294 traverse the membrane as a helical segment; that stretch reads IYAYISIIALFVCLPPAIIV. Residues 295–372 are Chloroplast intermembrane-facing; the sequence is EGPQLMKHGF…IAFGNKISTQ (78 aa). Residues 373-393 traverse the membrane as a helical segment; it reads TAIGTSIAIAGVALYSLIKAK. The Lumenal segment spans residues 394–404; that stretch reads MEEEKRQMKST.

Belongs to the TPT transporter family. TPT (TC 2.A.7.9) subfamily. Post-translationally, the N-terminus is blocked.

It is found in the plastid. Its subcellular location is the chloroplast membrane. Mediates the export of fixed carbons from the chloroplasts into the cytosol in the form of triose phosphates. The sequence is that of Triose phosphate/phosphate translocator, chloroplastic from Spinacia oleracea (Spinach).